The chain runs to 192 residues: NOP protein chaperone 1 (192 aa).

The span at 1 to 26 (MEVSGESHSGPSCSSSSRDGSGVSVS) shows a compositional bias: low complexity. Residues 1–39 (MEVSGESHSGPSCSSSSRDGSGVSVSKELLMAGSGGRGG) form a disordered region. Serine 34 and serine 66 each carry phosphoserine. The interval 118–192 (FEMNQSHSKE…SENKEKQENK (75 aa)) is disordered. A compositionally biased stretch (acidic residues) spans 129–152 (DSSEENSQDSSEESSESEDEDDST). The segment covering 164–177 (KLPHSEDGKGKIEV) has biased composition (basic and acidic residues). At serine 180 the chain carries Phosphoserine.

As to quaternary structure, interacts with NOP58, RUVBL1 and RUVBL2; the interactions are direct and NOPCHAP1 bridges the association of NOP58 with RUVBL1:RUVBL2 even in absence of snoRNAs. The interactions with RUVBL1 and RUVBL2 are disrupted upon ATP binding.

It is found in the nucleus. Client-loading PAQosome/R2TP complex cofactor that selects NOP58 to promote box C/D small nucleolar ribonucleoprotein (snoRNP) assembly. Acts as a bridge between NOP58 and the R2TP complex via RUVBL1:RUVBL2. The chain is NOP protein chaperone 1 (NOPCHAP1) from Bos taurus (Bovine).